The sequence spans 642 residues: Threonine--tRNA ligase (642 aa).

Residues 1-61 enclose the TGS domain; that stretch reads MPIITLPDGS…TEDAELQLIT (61 aa). Residues 242-535 form a catalytic region; it reads DHRKLGKSLD…LVEHYEGKFP (294 aa). The Zn(2+) site is built by Cys-333, His-384, and His-512.

Belongs to the class-II aminoacyl-tRNA synthetase family. Homodimer. The cofactor is Zn(2+).

It is found in the cytoplasm. It catalyses the reaction tRNA(Thr) + L-threonine + ATP = L-threonyl-tRNA(Thr) + AMP + diphosphate + H(+). Its function is as follows. Catalyzes the attachment of threonine to tRNA(Thr) in a two-step reaction: L-threonine is first activated by ATP to form Thr-AMP and then transferred to the acceptor end of tRNA(Thr). Also edits incorrectly charged L-seryl-tRNA(Thr). This Hydrogenovibrio crunogenus (strain DSM 25203 / XCL-2) (Thiomicrospira crunogena) protein is Threonine--tRNA ligase.